We begin with the raw amino-acid sequence, 179 residues long: Beta-defensin 22 (179 aa).

A signal peptide spans 1-20 (MKSLLSTLVIIMFLAHLVTG). 3 cysteine pairs are disulfide-bonded: Cys27–Cys58, Cys34–Cys52, and Cys38–Cys59. Positions 105–150 (GTPTKTSAPAKTSAPAKTSTTTKASNAAKASTTTKASNAAKASAAT) are enriched in low complexity. The interval 105–152 (GTPTKTSAPAKTSAPAKTSTTTKASNAAKASTTTKASNAAKASAATMA) is disordered.

The protein belongs to the beta-defensin family. O-glycosylated; glycans contain alpha(2,3)-linked sialic acids. In terms of tissue distribution, specifically expressed in corpus epididymis and cauda epididymis with expression in corpus being highest (at protein level). Not detected in other tissues tested, including testis, prostate, seminal vesicle and vas deferens (at protein level).

Its subcellular location is the cytoplasmic vesicle. It localises to the secretory vesicle. It is found in the acrosome. The protein resides in the secreted. The protein localises to the extracellular space. Its function is as follows. Probable component of sperm glycocalyx. Likely protects and facilitates transport of sperm in the female reproductive tract. Probably released from the sperm surface during capacitation. This is Beta-defensin 22 from Mus musculus (Mouse).